Consider the following 191-residue polypeptide: Ion-translocating oxidoreductase complex subunit B (191 aa).

Residues 1-26 form a hydrophobic region; sequence MSAVLIAVLALLALCLLGGAILGFAA. The 59-residue stretch at 32-90 folds into the 4Fe-4S domain; sequence EGDPIAEQINALLPQTQCGQCGYPGCKPYAEAIAGGDKINKCPPGGEATIQALADLLDV. Positions 49, 52, 57, 73, 114, 117, 120, 124, 144, 147, 150, and 154 each coordinate [4Fe-4S] cluster. 4Fe-4S ferredoxin-type domains lie at 105 to 134 and 135 to 164; these read MVAY…GAAR and QMHT…MIEV.

Belongs to the 4Fe4S bacterial-type ferredoxin family. RnfB subfamily. In terms of assembly, the complex is composed of six subunits: RnfA, RnfB, RnfC, RnfD, RnfE and RnfG. It depends on [4Fe-4S] cluster as a cofactor.

The protein resides in the cell inner membrane. Its function is as follows. Part of a membrane-bound complex that couples electron transfer with translocation of ions across the membrane. In Stutzerimonas stutzeri (strain A1501) (Pseudomonas stutzeri), this protein is Ion-translocating oxidoreductase complex subunit B.